Consider the following 864-residue polypeptide: Leucine--tRNA ligase (864 aa).

Residues 42–52 (PYPSGRLHMGH) carry the 'HIGH' region motif. A 'KMSKS' region motif is present at residues 621–625 (KMSKS). Position 624 (lysine 624) interacts with ATP.

This sequence belongs to the class-I aminoacyl-tRNA synthetase family.

It localises to the cytoplasm. It catalyses the reaction tRNA(Leu) + L-leucine + ATP = L-leucyl-tRNA(Leu) + AMP + diphosphate. The chain is Leucine--tRNA ligase from Alkalilimnicola ehrlichii (strain ATCC BAA-1101 / DSM 17681 / MLHE-1).